Reading from the N-terminus, the 227-residue chain is Small ribosomal subunit protein uS3 (227 aa).

The 71-residue stretch at 39–109 (IHRFFEKLTR…KIVINVDAVD (71 aa)) folds into the KH type-2 domain.

Belongs to the universal ribosomal protein uS3 family. As to quaternary structure, part of the 30S ribosomal subunit. Forms a tight complex with proteins S10 and S14.

In terms of biological role, binds the lower part of the 30S subunit head. Binds mRNA in the 70S ribosome, positioning it for translation. The sequence is that of Small ribosomal subunit protein uS3 from Mesomycoplasma hyopneumoniae (strain 232) (Mycoplasma hyopneumoniae).